We begin with the raw amino-acid sequence, 671 residues long: DNA ligase (671 aa).

Residues aspartate 31–aspartate 35, serine 80–leucine 81, and glutamate 110 each bind NAD(+). The N6-AMP-lysine intermediate role is filled by lysine 112. 4 residues coordinate NAD(+): arginine 133, glutamate 167, lysine 283, and lysine 307. 4 residues coordinate Zn(2+): cysteine 401, cysteine 404, cysteine 419, and cysteine 424. The 85-residue stretch at glutamate 587 to glutamate 671 folds into the BRCT domain.

The protein belongs to the NAD-dependent DNA ligase family. LigA subfamily. The cofactor is Mg(2+). Mn(2+) serves as cofactor.

It carries out the reaction NAD(+) + (deoxyribonucleotide)n-3'-hydroxyl + 5'-phospho-(deoxyribonucleotide)m = (deoxyribonucleotide)n+m + AMP + beta-nicotinamide D-nucleotide.. In terms of biological role, DNA ligase that catalyzes the formation of phosphodiester linkages between 5'-phosphoryl and 3'-hydroxyl groups in double-stranded DNA using NAD as a coenzyme and as the energy source for the reaction. It is essential for DNA replication and repair of damaged DNA. The sequence is that of DNA ligase from Listeria innocua serovar 6a (strain ATCC BAA-680 / CLIP 11262).